Here is a 226-residue protein sequence, read N- to C-terminus: Transmembrane protein 204 (226 aa).

Topologically, residues 1–5 (MTVQR) are cytoplasmic. A helical membrane pass occupies residues 6 to 26 (LVAAAVLVALVSLILNNVAAF). At 27-103 (TSNWVCQTLE…LQFDMMRACN (77 aa)) the chain is on the extracellular side. The helical transmembrane segment at 104-124 (LVATAALTAGQLTFLLGLVGL) threads the bilayer. At 125–136 (PLLSPDAPCWEE) the chain is on the cytoplasmic side. Residues 137-157 (AMAAAFQLASFVLVIGLVTFY) traverse the membrane as a helical segment. The Extracellular segment spans residues 158 to 170 (RIGPYTNLSWSCY). N164 carries N-linked (GlcNAc...) asparagine glycosylation. Residues 171–191 (LNIGACLLATLAAAMLIWNIL) traverse the membrane as a helical segment. Residues 192–226 (HKREDCMAPRVIVISRSLTARFRRGLDNDYVESPC) are Cytoplasmic-facing.

Highly expressed in lung, heart, kidney and placenta. Lower expression in thymus, spleen, liver, testis and ovary. Expressed in endothelial and restricted epithelial cell populations.

It is found in the cell junction. The protein resides in the adherens junction. The protein localises to the cell membrane. In terms of biological role, can influence paracellular permeability. Appears to be involved in cell-cell interactions through adherens. The polypeptide is Transmembrane protein 204 (TMEM204) (Homo sapiens (Human)).